The primary structure comprises 315 residues: MDIPNTTATIATIPQAPAGFRSGFVAIVGRPNVGKSTLMNQLVGQKIAITSPVAQTTRNRLQGIITTPSSQIILLDTPGIHKPHHELGRVLVKNAIQAIHSVDLVVFLVDSSATLGRGDRFVVDLLQKTDGPVVVGLNKQDQQPPDQREELNASYETLTENHGWPCFKFSALTGEGLSNFQSALEARLDPGPYYYPPDLVTDQPERFIMAELIREQILLLTRQEVPHSVAIAIEKVEETPERTNVFAAITVERGSQKGIIIGQKGSMLQAIGTAARQQIQKLISGDVYLKLFVKVEPKWRQSRQQLLEFGYRVEE.

The region spanning 21 to 190 (RSGFVAIVGR…QSALEARLDP (170 aa)) is the Era-type G domain. Positions 29-36 (GRPNVGKS) are G1. 29–36 (GRPNVGKS) is a binding site for GTP. The segment at 55-59 (QTTRN) is G2. The interval 76-79 (DTPG) is G3. GTP is bound by residues 76–80 (DTPGI) and 138–141 (NKQD). Positions 138–141 (NKQD) are G4. The tract at residues 169 to 171 (FSA) is G5. Positions 221–297 (TRQEVPHSVA…YLKLFVKVEP (77 aa)) constitute a KH type-2 domain.

It belongs to the TRAFAC class TrmE-Era-EngA-EngB-Septin-like GTPase superfamily. Era GTPase family. Monomer.

The protein localises to the cytoplasm. It localises to the cell inner membrane. Its function is as follows. An essential GTPase that binds both GDP and GTP, with rapid nucleotide exchange. Plays a role in 16S rRNA processing and 30S ribosomal subunit biogenesis and possibly also in cell cycle regulation and energy metabolism. This Synechocystis sp. (strain ATCC 27184 / PCC 6803 / Kazusa) protein is GTPase Era.